Consider the following 351-residue polypeptide: MNRIFFILVAAGVPLSVIGSLMHWPSAVLFAVYCVTIIALASYMGRATESLSIIAGPRIGGLLNATFGNAVELIISLFALKEGLTGIVLASLTGSVLGNLLLVAGLSFFVGGLKYKRQEFNIHDARHNSGLLIFAIIVAFVIPEVFSVGMGNASKLNLSIGISIIMILLYVAALYFKLVTHRGVYQPNNAAQTEEEEEPEWSGKVATIVLFAATIVVAYISENLVHTFHSVAEQFGWSELFIGVIIVAIVGNAAEHASAIIMAFKNKMDIAVEIAVGSTLQIAMFVAPVLVICSIFFPTSMPLVFTLPELVAMVSAVLLMIAISNDGDSNWFEGATLLAAYVIMAIGFFLL.

A run of 11 helical transmembrane segments spans residues 4–24, 25–45, 59–79, 86–106, 130–150, 156–176, 205–225, 241–261, 282–302, 303–323, and 331–351; these read IFFILVAAGVPLSVIGSLMHW, PSAVLFAVYCVTIIALASYMG, IGGLLNATFGNAVELIISLFA, GIVLASLTGSVLGNLLLVAGL, GLLIFAIIVAFVIPEVFSVGM, LNLSIGISIIMILLYVAALYF, VATIVLFAATIVVAYISENLV, FIGVIIVAIVGNAAEHASAII, IAMFVAPVLVICSIFFPTSMP, LVFTLPELVAMVSAVLLMIAI, and WFEGATLLAAYVIMAIGFFLL.

This sequence belongs to the Ca(2+):cation antiporter (CaCA) (TC 2.A.19) family. Cation/proton exchanger (CAX) subfamily. As to quaternary structure, homotrimer.

The protein localises to the cell membrane. Calcium efflux is tightly regulated by intracellular pH. Its function is as follows. Ca(+)/H(+) antiporter that extrudes calcium in exchange for external protons. Does not transport sodium or potassium. The protein is Ca(2+)/H(+) antiporter ChaA (chaA) of Bacillus subtilis (strain 168).